Here is a 625-residue protein sequence, read N- to C-terminus: DNA-directed RNA polymerase subunit gamma (625 aa).

4 residues coordinate Zn(2+): Cys71, Cys73, Cys86, and Cys89. 3 residues coordinate Mg(2+): Asp467, Asp469, and Asp471.

Belongs to the RNA polymerase beta' chain family. RpoC1 subfamily. In cyanobacteria the RNAP catalytic core is composed of 2 alpha, 1 beta, 1 beta', 1 gamma and 1 omega subunit. When a sigma factor is associated with the core the holoenzyme is formed, which can initiate transcription. The cofactor is Mg(2+). Zn(2+) serves as cofactor.

It catalyses the reaction RNA(n) + a ribonucleoside 5'-triphosphate = RNA(n+1) + diphosphate. DNA-dependent RNA polymerase catalyzes the transcription of DNA into RNA using the four ribonucleoside triphosphates as substrates. This Gloeothece citriformis (strain PCC 7424) (Cyanothece sp. (strain PCC 7424)) protein is DNA-directed RNA polymerase subunit gamma.